The following is a 571-amino-acid chain: Hemagglutinin-neuraminidase (571 aa).

Residues 1-25 (MEDYSNLSLKSIPKRTCRIIFRTAT) are Intravirion-facing. Residues 26–46 (ILGICTLIVLCSSILHEIIHL) form a helical membrane-spanning segment. The Virion surface portion of the chain corresponds to 47–571 (DVSSGLMDSD…IIPFLRELIP (525 aa)). Disulfide bonds link Cys166-Cys190, Cys180-Cys241, and Cys232-Cys245. Residues 228–233 (NRKSCS) are important for neuraminidase activity. Residues 228–233 (NRKSCS) form an involved in neuraminidase activity region. N-linked (GlcNAc...) asparagine; by host glycans are attached at residues Asn272, Asn284, Asn335, and Asn341. Disulfide bonds link Cys338-Cys459, Cys370-Cys380, and Cys453-Cys463. An N-linked (GlcNAc...) asparagine; by host glycan is attached at Asn386. Positions 393-398 (GAEGRL) are sialic receptor-binding site. Residues Asn454, Asn498, Asn501, Asn517, and Asn522 are each glycosylated (N-linked (GlcNAc...) asparagine; by host). The cysteines at positions 535 and 546 are disulfide-linked.

Belongs to the paramyxoviruses hemagglutinin-neuraminidase family. As to quaternary structure, homotetramer; composed of disulfide-linked homodimers. Interacts with F protein trimer.

The protein resides in the virion membrane. It localises to the host cell membrane. It catalyses the reaction Hydrolysis of alpha-(2-&gt;3)-, alpha-(2-&gt;6)-, alpha-(2-&gt;8)- glycosidic linkages of terminal sialic acid residues in oligosaccharides, glycoproteins, glycolipids, colominic acid and synthetic substrates.. Attaches the virus to sialic acid-containing cell receptors and thereby initiating infection. Binding of HN protein to the receptor induces a conformational change that allows the F protein to trigger virion/cell membranes fusion. In terms of biological role, neuraminidase activity ensures the efficient spread of the virus by dissociating the mature virions from the neuraminic acid containing glycoproteins. The chain is Hemagglutinin-neuraminidase (HN) from Human parainfluenza 2 virus (strain Toshiba) (HPIV-2).